The sequence spans 268 residues: Hydroxyethylthiazole kinase (268 aa).

A substrate-binding site is contributed by Met-45. ATP contacts are provided by Arg-121 and Thr-167. Residue Gly-194 coordinates substrate.

It belongs to the Thz kinase family. Requires Mg(2+) as cofactor.

The catalysed reaction is 5-(2-hydroxyethyl)-4-methylthiazole + ATP = 4-methyl-5-(2-phosphooxyethyl)-thiazole + ADP + H(+). It participates in cofactor biosynthesis; thiamine diphosphate biosynthesis; 4-methyl-5-(2-phosphoethyl)-thiazole from 5-(2-hydroxyethyl)-4-methylthiazole: step 1/1. In terms of biological role, catalyzes the phosphorylation of the hydroxyl group of 4-methyl-5-beta-hydroxyethylthiazole (THZ). This is Hydroxyethylthiazole kinase from Bacillus anthracis (strain A0248).